The following is a 266-amino-acid chain: Proteasome subunit beta type-7 (266 aa).

A propeptide spanning residues 1 to 33 (MNHDPFSWGRPADSTYGAYNTQIANAGASPMVN) is cleaved from the precursor.

Belongs to the peptidase T1B family. As to quaternary structure, the 26S proteasome consists of a 20S proteasome core and two 19S regulatory subunits. The 20S proteasome core is composed of 28 subunits that are arranged in four stacked rings, resulting in a barrel-shaped structure. The two end rings are each formed by seven alpha subunits, and the two central rings are each formed by seven beta subunits. The catalytic chamber with the active sites is on the inside of the barrel. Interacts with CIC1.

It is found in the cytoplasm. The protein localises to the nucleus. Non-catalytic component of the proteasome which degrades poly-ubiquitinated proteins in the cytoplasm and in the nucleus. It is essential for the regulated turnover of proteins and for the removal of misfolded proteins. The proteasome is a multicatalytic proteinase complex that is characterized by its ability to cleave peptides with Arg, Phe, Tyr, Leu, and Glu adjacent to the leaving group at neutral or slightly basic pH. It has an ATP-dependent proteolytic activity. PRE3 and PRE4 are necessary for the peptidyl-glutamyl-peptide-hydrolyzing activity. This chain is Proteasome subunit beta type-7 (PRE4), found in Saccharomyces cerevisiae (strain ATCC 204508 / S288c) (Baker's yeast).